The following is a 221-amino-acid chain: Phosphoribosylformylglycinamidine synthase subunit PurQ (221 aa).

One can recognise a Glutamine amidotransferase type-1 domain in the interval 2–221 (NVGVIVFPGS…FAGLLEPVAA (220 aa)). Cysteine 86 serves as the catalytic Nucleophile. Catalysis depends on residues histidine 194 and glutamate 196.

Part of the FGAM synthase complex composed of 1 PurL, 1 PurQ and 2 PurS subunits.

The protein resides in the cytoplasm. It catalyses the reaction N(2)-formyl-N(1)-(5-phospho-beta-D-ribosyl)glycinamide + L-glutamine + ATP + H2O = 2-formamido-N(1)-(5-O-phospho-beta-D-ribosyl)acetamidine + L-glutamate + ADP + phosphate + H(+). The catalysed reaction is L-glutamine + H2O = L-glutamate + NH4(+). It participates in purine metabolism; IMP biosynthesis via de novo pathway; 5-amino-1-(5-phospho-D-ribosyl)imidazole from N(2)-formyl-N(1)-(5-phospho-D-ribosyl)glycinamide: step 1/2. In terms of biological role, part of the phosphoribosylformylglycinamidine synthase complex involved in the purines biosynthetic pathway. Catalyzes the ATP-dependent conversion of formylglycinamide ribonucleotide (FGAR) and glutamine to yield formylglycinamidine ribonucleotide (FGAM) and glutamate. The FGAM synthase complex is composed of three subunits. PurQ produces an ammonia molecule by converting glutamine to glutamate. PurL transfers the ammonia molecule to FGAR to form FGAM in an ATP-dependent manner. PurS interacts with PurQ and PurL and is thought to assist in the transfer of the ammonia molecule from PurQ to PurL. This is Phosphoribosylformylglycinamidine synthase subunit PurQ from Synechococcus sp. (strain ATCC 27144 / PCC 6301 / SAUG 1402/1) (Anacystis nidulans).